A 399-amino-acid chain; its full sequence is P2X purinoceptor 1 (399 aa).

Over 1–28 (MARRLQDELSAFFFEYDTPRMVLVRNKK) the chain is Cytoplasmic. A helical membrane pass occupies residues 29-50 (VGVIFRLIQLVVLVYVIGWVFV). Over 51–338 (YEKGYQTSSD…IPTMTTIGSG (288 aa)) the chain is Extracellular. Residues K68, K70, and K140 each coordinate CTP. Residue K70 participates in ATP binding. Disulfide bonds link C117/C165, C126/C149, and C132/C159. Residues N153 and N184 are each glycosylated (N-linked (GlcNAc...) asparagine). T186 is a CTP binding site. ATP is bound at residue T186. N-linked (GlcNAc...) asparagine glycosylation is present at N210. 2 cysteine pairs are disulfide-bonded: C217–C227 and C261–C270. The ATP site is built by S286, N290, and R292. N290 and R292 together coordinate CTP. An N-linked (GlcNAc...) asparagine glycan is attached at N300. K309 lines the CTP pocket. An ATP-binding site is contributed by K309. Positions 331 to 338 (TMTTIGSG) are pore-forming motif. Residues 339–358 (IGIFGVATVLCDLLLLHILP) form a helical membrane-spanning segment. The Cytoplasmic segment spans residues 359–399 (KRHYYKQKKFKYAEDMGPGEGEHDPVATSSTLGLQENMRTS). The tract at residues 374–399 (MGPGEGEHDPVATSSTLGLQENMRTS) is disordered. The span at 385–399 (ATSSTLGLQENMRTS) shows a compositional bias: polar residues. S387 and S388 each carry phosphoserine. At T389 the chain carries Phosphothreonine.

Belongs to the P2X receptor family. As to quaternary structure, functional P2XRs are organized as homomeric and heteromeric trimers. Homotrimer. Forms heterodimer with P2RX2. Forms heterodimer with P2RX4. Forms heterodimer with P2RX5. High levels in vas deferens and urinary bladder. Lower extent in spinal cord, coeliac ganglion, lung and spleen (probably in the smooth muscle part of both organs).

It is found in the cell membrane. It catalyses the reaction Ca(2+)(in) = Ca(2+)(out). It carries out the reaction K(+)(in) = K(+)(out). The catalysed reaction is Na(+)(in) = Na(+)(out). Its activity is regulated as follows. Activated by low concentrations of ATP (&lt;1 uM). Undergoes rapid desensitisation. Sensitives to the ATP agonist:alpha/beta-methylene-ATP. Modulated by cholesterol. ATP-gated nonselective transmembrane cation channel permeable to potassium, sodium and with relatively high calcium permeability. Furthermore, CTP functions as a weak affinity agonist for P2RX1. Plays a role a role in urogenital, immune and cardiovascular function. Specifically, plays an important role in neurogenic contraction of smooth muscle of the vas deferens, and therefore is essential for normal male reproductive function. In addition, contributes to smooth muscle contractions of the urinary bladder. On platelets, contributes to platelet activation and aggregation and thereby, also to thrombosis. On neutrophils, it is involved in chemotaxis and in mitigating the activation of circulating cells. The chain is P2X purinoceptor 1 (P2rx1) from Rattus norvegicus (Rat).